The following is an 892-amino-acid chain: MRTAEIGQRFVDFFESKGHTVVPSASLLYNDPTLLFVNAGMVPFKPYLMGTEPSPWKRATSIQKCVRTLDIDEVGKTTRHGTFFQMLGNFSFGDYFKNEAIQYAWELVTKPAEQGGLGFDPASIWVTVLGPGFHPDYPEGDIEAREAWRAAGIPDEQIQGRSLKDNYWHMGVPGPGGPCSEIYIDRGPAYGPDGGPEADEDRYLEIWNLVFETEDLSAVRAKDDFDIAGPLRSLNIDTGAGLERIAYLLQGVDNMYETDQVFPVIEKASEMSGKRYGARHDDDVRLRVVADHVRSGLMLMTDGVTPGNEARGYVLRRLLRRVVRAMRLLGVADPVLPELLSVSRDLMADSFPDVLTQWDRVIGAATAEEDTFRRTLSSGTAMLDAAVVETKASGSKTLSGEKAFQLHDTYGFPIDLTLEMAAEQGLEVDRNKFTALMAEQRARAKADSQAKKGLLTDREAYSQVRALGETPFLGYTDLTVDTTVTGIIANGTSVTAAEPGAVVEIVLAETPFYAEMGGQDSDSGIIRANGIDFEVLDVQRPVPGLIVHKVHLDGDLAVGDRVTALVNPATRFGACQAHTATHVIHAALRELVGPSATQAGSYNKPGYLRFDFSATKGLSDSLKDEIEERCNVAIHDDFEVTDTQMPLEDAKAMGAMAMFGEKYPPIVRVVELAGPWSRELCGGTHVASTGRIGMLSLLGEQSVGSGTRRVEALVSTDAFRHMAAERALVNELTGILKVQPDQLADRVSKLAADLKEAERKLGAARTRELLGQVDDIVAGTTPAGSFDLVAAKVPGVAGSDLRTLAAEIRARVKDRPAVVTLIGGTHDKPAMIVATTESARAAGAKAGALIKVGVAPIGGRGGGKDDMAQGAGSDPTGIDAALRAVNTELTAL.

Positions 578, 582, 681, and 685 each coordinate Zn(2+).

The protein belongs to the class-II aminoacyl-tRNA synthetase family. Requires Zn(2+) as cofactor.

The protein resides in the cytoplasm. The catalysed reaction is tRNA(Ala) + L-alanine + ATP = L-alanyl-tRNA(Ala) + AMP + diphosphate. Its function is as follows. Catalyzes the attachment of alanine to tRNA(Ala) in a two-step reaction: alanine is first activated by ATP to form Ala-AMP and then transferred to the acceptor end of tRNA(Ala). Also edits incorrectly charged Ser-tRNA(Ala) and Gly-tRNA(Ala) via its editing domain. The protein is Alanine--tRNA ligase of Cutibacterium acnes (strain DSM 16379 / KPA171202) (Propionibacterium acnes).